The sequence spans 129 residues: Small ribosomal subunit protein uS11 (129 aa).

It belongs to the universal ribosomal protein uS11 family. In terms of assembly, part of the 30S ribosomal subunit. Interacts with proteins S7 and S18. Binds to IF-3.

Functionally, located on the platform of the 30S subunit, it bridges several disparate RNA helices of the 16S rRNA. Forms part of the Shine-Dalgarno cleft in the 70S ribosome. The protein is Small ribosomal subunit protein uS11 of Caulobacter sp. (strain K31).